A 430-amino-acid chain; its full sequence is Trigger factor (430 aa).

A PPIase FKBP-type domain is found at 163–248 (GNIAIIDFKG…VKEIKVKEIP (86 aa)).

Belongs to the FKBP-type PPIase family. Tig subfamily.

It localises to the cytoplasm. It catalyses the reaction [protein]-peptidylproline (omega=180) = [protein]-peptidylproline (omega=0). Its function is as follows. Involved in protein export. Acts as a chaperone by maintaining the newly synthesized protein in an open conformation. Functions as a peptidyl-prolyl cis-trans isomerase. This is Trigger factor from Clostridium kluyveri (strain NBRC 12016).